The chain runs to 416 residues: MGYPKAFTSSDSEPEPDLSRDLGNPVMGNPGVVSRSSSTVAQHSVRNNPTGPDGRLAGLWNARALLRFPAEVNGVRLDFKSVSSRRPTSRLSLLPYSLCSICPSSQATMTSKDHVKSQIPRLSAINDLHKIWPTVEEHGAAIIESFLSLDIVRRLNEEVDPFVKIEPIPAAKTKDHPNHVLSTTTRLVNVLAPISKAYREDVLNSKVLHRICSDAFHVYGDYWVLMGAVMELAPSNPAQPLHRDMRFSHPIVEYLKPDAPATSINFLVALSPFTAENGATHVILGSHKWQNLSNVSMDATVRALMNPGDALLITDSTIHCGGAETTGTETRRLLTITMGISQLTPLESNLAVPRPVIESLTPLAQRLLGWASQRSAAPRDIGLLTIRGNSIEKTMNLKAEQPLHDDEAEPLCRETI.

The interval 1–53 is disordered; it reads MGYPKAFTSSDSEPEPDLSRDLGNPVMGNPGVVSRSSSTVAQHSVRNNPTGPD. Residues 34–50 are compositionally biased toward polar residues; that stretch reads SRSSSTVAQHSVRNNPT. Residues H242, D244, and H319 each contribute to the Fe cation site.

The protein belongs to the PhyH family. As to quaternary structure, homodimer. Fe cation serves as cofactor.

The enzyme catalyses (-)-4'-methoxycyclopeptine + 2-oxoglutarate + O2 = (Z)-4'-methoxydehydrocyclopeptine + succinate + CO2 + H2O. It catalyses the reaction (Z)-4'-methoxydehydrocyclopeptine + 2-oxoglutarate + O2 = (-)-4'-methoxycyclopenine + succinate + CO2. The catalysed reaction is (-)-cyclopeptine + 2-oxoglutarate + O2 = (Z)-dehydrocyclopeptine + succinate + CO2 + H2O. It carries out the reaction (Z)-dehydrocyclopeptine + 2-oxoglutarate + O2 = (-)-cyclopenine + succinate + CO2. It functions in the pathway secondary metabolite biosynthesis. It participates in alkaloid biosynthesis. Its pathway is mycotoxin biosynthesis. Iron/alpha-ketoglutarate-dependent dioxygenase; part of the gene cluster that mediates the biosynthesis of the aspoquinolone mycotoxins. Within the pathway, the iron/alpha-ketoglutarate-dependent dioxygenase asqJ acts as a (-)-cyclopenine synthase that converts 4'-methoxycyclopeptin into 4'-methoxydehydrocyclopeptin through dehydrogenation to form a double bond between C-alpha and C-beta of the O-methyltyrosine side chain. AsqJ is a very unique dioxygenase which is capable of catalyzing radical-mediated dehydrogenation and epoxidation reactions sequentially on a 6,7-benzo-diazepinedione substrate in the 4'-methoxyviridicatin biosynthetic pathway. AsqJ is also capable of converting cyclopeptin into dehydrocyclopeptin. The first step of the pathway is catalyzed by the nonribosomal peptide synthetase asqK that condenses anthranilic acid and O-methyl-L-tyrosine to produce 4'-methoxycyclopeptin. 4'-methoxycyclopeptin is then converted to 4'-methoxydehydrocyclopeptin by the ketoglutarate-dependent dioxygenase asqJ. AsqJ also converts its first product 4'-methoxydehydrocyclopeptin to 4'-methoxycyclopenin. The following conversion of 4'-methoxycyclopenin into 4'-methoxyviridicatin is catalyzed by the cyclopenase asqI. 4'-methoxyviridicatin is the precursor of quinolone natural products, and is further converted to quinolinone B. The prenyltransferase asqH1 then catalyzes the canonical Friedel-Crafts alkylation of quinolinone B with dimethylallyl cation to yield dimethylallyl quinolone, which is subjected to FAD-dependent dehydrogenation by the FAD-linked oxidoreductase asqF to yield conjugated aryl diene. The delta(3') double bond then serves as the site of the second alkylation with DMAPP catalyzed by the prenyltransferase asqH2 to yield a carbenium ion intermediate, which can be attacked by H(2)O to yield a styrenyl quinolone containing a C3'-hydroxyprenyl chain. The FAD-dependent monooxygenase asqG performs epoxidation of the terminal C7'-C8' olefin. Finally, after dehydratation of the epoxide at C3 by asqC, the quinolone epoxide rearrangement protein asqO catalyzes an enzymatic 3-exo-tet cyclization to yield the cyclopropyl-THF ring system in aspoquinolone. The chain is Iron/alpha-ketoglutarate-dependent dioxygenase asqJ from Emericella nidulans (strain FGSC A4 / ATCC 38163 / CBS 112.46 / NRRL 194 / M139) (Aspergillus nidulans).